A 461-amino-acid polypeptide reads, in one-letter code: Transcription factor SOX-10 (461 aa).

Disordered stretches follow at residues 1 to 60 (MADD…ADDD), 154 to 191 (LRMQ…GEAG), 205 to 268 (LDHR…DFGN), 350 to 369 (KAQV…DQPS), and 433 to 461 (AISD…LSRP). A compositionally biased stretch (polar residues) spans 30-42 (ASDNSSHLASSGN). The tract at residues 56-96 (EADDDKFPVCIREAVSQVLSGYDWTLVPMPVRVNGSNKSKP) is dimerization (DIM). Positions 98 to 166 (VKRPMNAFMV…QHKKDHPDYK (69 aa)) form a DNA-binding region, HMG box. Over residues 154–167 (LRMQHKKDHPDYKY) the composition is skewed to basic and acidic residues. Gly residues predominate over residues 181–191 (EGEGQVEGEAG). The segment at 221–306 (PEHSSGQSHG…NGHAGHPGHV (86 aa)) is transactivation domain (TAM). Residues 247-264 (ADSKREGRSLGEGGKPHI) show a composition bias toward basic and acidic residues. The tract at residues 350–461 (KAQVKTEGSA…QPVYTTLSRP (112 aa)) is transactivation domain (TAC). Over residues 441 to 461 (VPQSHSPTHWEQPVYTTLSRP) the composition is skewed to polar residues.

It is found in the cytoplasm. Its subcellular location is the nucleus. Functionally, transcription factor that plays a central role in developing and mature glia. Specifically activates expression of myelin genes, during oligodendrocyte (OL) maturation, thereby playing a central role in oligodendrocyte maturation and CNS myelination. This Gallus gallus (Chicken) protein is Transcription factor SOX-10 (SOX10).